Reading from the N-terminus, the 358-residue chain is Probable dual-specificity RNA methyltransferase RlmN 1 (358 aa).

In terms of domain architecture, Radical SAM core spans 101–326 (MQAGGTLCIS…REKGFYTLLR (226 aa)). The cysteines at positions 108 and 337 are disulfide-linked. Cys-115, Cys-119, and Cys-122 together coordinate [4Fe-4S] cluster. S-adenosyl-L-methionine-binding positions include 162 to 163 (GE), Ser-194, 218 to 220 (SLN), and Asn-294. Cys-337 acts as the S-methylcysteine intermediate in catalysis.

Belongs to the radical SAM superfamily. RlmN family. It depends on [4Fe-4S] cluster as a cofactor.

It localises to the cytoplasm. The enzyme catalyses adenosine(2503) in 23S rRNA + 2 reduced [2Fe-2S]-[ferredoxin] + 2 S-adenosyl-L-methionine = 2-methyladenosine(2503) in 23S rRNA + 5'-deoxyadenosine + L-methionine + 2 oxidized [2Fe-2S]-[ferredoxin] + S-adenosyl-L-homocysteine. The catalysed reaction is adenosine(37) in tRNA + 2 reduced [2Fe-2S]-[ferredoxin] + 2 S-adenosyl-L-methionine = 2-methyladenosine(37) in tRNA + 5'-deoxyadenosine + L-methionine + 2 oxidized [2Fe-2S]-[ferredoxin] + S-adenosyl-L-homocysteine. Specifically methylates position 2 of adenine 2503 in 23S rRNA and position 2 of adenine 37 in tRNAs. The chain is Probable dual-specificity RNA methyltransferase RlmN 1 from Protochlamydia amoebophila (strain UWE25).